The sequence spans 512 residues: 2,3-bisphosphoglycerate-independent phosphoglycerate mutase (512 aa).

2 residues coordinate Mn(2+): Asp12 and Ser62. The active-site Phosphoserine intermediate is the Ser62. Residues His123, 153–154 (RD), Arg185, Arg191, 260–263 (RPDR), and Lys333 contribute to the substrate site. Positions 400, 404, 441, 442, and 460 each coordinate Mn(2+).

This sequence belongs to the BPG-independent phosphoglycerate mutase family. As to quaternary structure, monomer. It depends on Mn(2+) as a cofactor.

It catalyses the reaction (2R)-2-phosphoglycerate = (2R)-3-phosphoglycerate. It participates in carbohydrate degradation; glycolysis; pyruvate from D-glyceraldehyde 3-phosphate: step 3/5. Its function is as follows. Catalyzes the interconversion of 2-phosphoglycerate and 3-phosphoglycerate. This Clostridium perfringens (strain SM101 / Type A) protein is 2,3-bisphosphoglycerate-independent phosphoglycerate mutase.